The primary structure comprises 155 residues: Ribosomal RNA large subunit methyltransferase H (155 aa).

S-adenosyl-L-methionine contacts are provided by residues Gly-104 and 123–128 (FGNITL).

The protein belongs to the RNA methyltransferase RlmH family. As to quaternary structure, homodimer.

It localises to the cytoplasm. It carries out the reaction pseudouridine(1915) in 23S rRNA + S-adenosyl-L-methionine = N(3)-methylpseudouridine(1915) in 23S rRNA + S-adenosyl-L-homocysteine + H(+). In terms of biological role, specifically methylates the pseudouridine at position 1915 (m3Psi1915) in 23S rRNA. The protein is Ribosomal RNA large subunit methyltransferase H of Mesoplasma florum (strain ATCC 33453 / NBRC 100688 / NCTC 11704 / L1) (Acholeplasma florum).